The sequence spans 526 residues: Thymocyte selection-associated high mobility group box protein TOX (526 aa).

A compositionally biased stretch (polar residues) spans 194–203; sequence NMGGTNVAHN. The tract at residues 194–264 is disordered; the sequence is NMGGTNVAHN…KKDPNEPQKP (71 aa). The segment covering 209–220 has biased composition (low complexity); that stretch reads GSKSATPSPSSS. Positions 228-245 are enriched in basic and acidic residues; the sequence is DASKINGGEKRPASDMGK. A Nuclear localization signal motif is present at residues 237-256; the sequence is KRPASDMGKKPKTPKKKKKK. Residues 246-256 show a composition bias toward basic residues; that stretch reads KPKTPKKKKKK. The HMG box DNA-binding region spans 261–329; sequence PQKPVSAYAL…EYLKQLAAYR (69 aa).

It belongs to the high motility group (HMG) box superfamily. In terms of assembly, interacts with HBO1 complex composed at least of KAT7/HBO1, ING4, MEAF6, and JADE2; this complex is involved in histone acetylation. Interacts with DNMT1, LEO1, PAF1, SAP130 and SIN3A; these interactors regulate chromatin remodeling. Interacts with an array of proteins involved in RNA processing and translation and DNA replication. As to expression, expressed in neurons of the subventricular zone (at protein level). Expressed in distinct subpopulations of thymocytes undergoing positive selection: double CD4-positive CD8-positive (DP) cells, CD4-positive CD8-low transitional cells and in single CD4-positive and CD8-positive cells (at protein level). Expressed in ILC progenitors and mature ILC subsets: ILC1, ILC2 and ILC3 (at protein level). Expressed in lymphoid tissue-inducer cells and bone marrow NK cell subsets. Abundant in thymus, liver and brain. Also detected in small intestine, spleen, stomach and testis. Highly expressed in tumor-infiltrating CD8-positive T cells (at protein level).

The protein localises to the nucleus. Functionally, transcriptional regulator with a major role in neural stem cell commitment and corticogenesis as well as in lymphoid cell development and lymphoid tissue organogenesis. Binds to GC-rich DNA sequences in the proximity of transcription start sites and may alter chromatin structure, modifying access of transcription factors to DNA. During cortical development, controls the neural stem cell pool by inhibiting the switch from proliferative to differentiating progenitors. Beyond progenitor cells, promotes neurite outgrowth in newborn neurons migrating to reach the cortical plate. May activate or repress critical genes for neural stem cell fate such as SOX2, EOMES and ROBO2. Plays an essential role in the development of lymphoid tissue-inducer (LTi) cells, a subset necessary for the formation of secondary lymphoid organs: peripheral lymph nodes and Peyer's patches. Acts as a developmental checkpoint and regulates thymocyte positive selection toward T cell lineage commitment. Required for the development of various T cell subsets, including CD4-positive helper T cells, CD8-positive cytotoxic T cells, regulatory T cells and CD1D-dependent natural killer T (NKT) cells. Required for the differentiation of common lymphoid progenitors (CMP) to innate lymphoid cells (ILC). May regulate the NOTCH-mediated gene program, promoting differentiation of the ILC lineage. Required at the progenitor phase of NK cell development in the bone marrow to specify NK cell lineage commitment. Upon chronic antigen stimulation, diverts T cell development by promoting the generation of exhaustive T cells, while suppressing effector and memory T cell programming. May regulate the expression of genes encoding inhibitory receptors such as PDCD1 and induce the exhaustion program, to prevent the overstimulation of T cells and activation-induced cell death. In Mus musculus (Mouse), this protein is Thymocyte selection-associated high mobility group box protein TOX.